We begin with the raw amino-acid sequence, 472 residues long: ATP synthase subunit beta (472 aa).

157 to 164 (GGAGVGKT) provides a ligand contact to ATP.

It belongs to the ATPase alpha/beta chains family. In terms of assembly, F-type ATPases have 2 components, CF(1) - the catalytic core - and CF(0) - the membrane proton channel. CF(1) has five subunits: alpha(3), beta(3), gamma(1), delta(1), epsilon(1). CF(0) has three main subunits: a(1), b(2) and c(9-12). The alpha and beta chains form an alternating ring which encloses part of the gamma chain. CF(1) is attached to CF(0) by a central stalk formed by the gamma and epsilon chains, while a peripheral stalk is formed by the delta and b chains.

It is found in the cell membrane. The catalysed reaction is ATP + H2O + 4 H(+)(in) = ADP + phosphate + 5 H(+)(out). In terms of biological role, produces ATP from ADP in the presence of a proton gradient across the membrane. The catalytic sites are hosted primarily by the beta subunits. The chain is ATP synthase subunit beta from Desulforudis audaxviator (strain MP104C).